We begin with the raw amino-acid sequence, 474 residues long: PTS system N-acetylmuramic acid-specific EIIBC component (474 aa).

Positions 1–89 (MAKEISSELL…SELLGDAPVQ (89 aa)) constitute a PTS EIIB type-1 domain. Over 1-123 (MAKEISSELL…LAKFATIFTP (123 aa)) the chain is Cytoplasmic. Residue C29 is the Phosphocysteine intermediate; for EIIB activity of the active site. In terms of domain architecture, PTS EIIC type-1 spans 115–474 (AKFATIFTPL…LFGCRNVNLD (360 aa)). Residues 124–144 (LIPGFIAAGLLLGIATLIATV) traverse the membrane as a helical segment. At 145 to 157 (MHVPADAQGTLPD) the chain is on the periplasmic side. The helical transmembrane segment at 158-178 (ALNFMKVFSKGLFTFLVILVG) threads the bilayer. Topologically, residues 179–180 (YN) are cytoplasmic. A helical membrane pass occupies residues 181–201 (AAQAFGGTGVNGAIIAALFLL). Residues 202–217 (GYNPAATTGYYAGFHD) are Periplasmic-facing. Residues 218–238 (FFGLPIDPRGNIIGVLIAAWA) form a helical membrane-spanning segment. Residues 239–260 (CARIEGMVRRFMPDDLDMLLTS) lie on the Cytoplasmic side of the membrane. A helical membrane pass occupies residues 261 to 281 (LITLLITATLAYLIIMPLGGW). At 282 to 301 (LFEGMSWLFMHLNSNPFGCA) the chain is on the periplasmic side. A helical membrane pass occupies residues 302-322 (VLAGLFLIAVVFGVHQGFIPV). The Cytoplasmic segment spans residues 323–334 (YLALMDSQGFNS). A helical transmembrane segment spans residues 335–355 (LFPILSMAGAGQVGAALALYW). The Periplasmic portion of the chain corresponds to 356-368 (RAQPHSALRSQVR). A helical membrane pass occupies residues 369–389 (GAIIPGLLGVGEPLIYGVTLP). Residues 390 to 393 (RMKP) are Cytoplasmic-facing. A helical transmembrane segment spans residues 394-414 (FVTACLGGAAGGLFIGLIAWW). The Periplasmic portion of the chain corresponds to 415 to 440 (GLPMGLNSAFGPSGLVALPLMTSAQG). Residues 441–461 (ILPAMAVYAGGILVAWVCGFI) traverse the membrane as a helical segment. At 462–474 (FTTLFGCRNVNLD) the chain is on the cytoplasmic side.

It is found in the cell inner membrane. It carries out the reaction N-acetyl-beta-D-muramate(out) + N(pros)-phospho-L-histidyl-[protein] = N-acetyl-beta-D-muramate 6-phosphate(in) + L-histidyl-[protein]. The phosphoenolpyruvate-dependent sugar phosphotransferase system (sugar PTS), a major carbohydrate active transport system, catalyzes the phosphorylation of incoming sugar substrates concomitantly with their translocation across the cell membrane. This system is involved in N-acetylmuramic acid (MurNAc) transport, yielding cytoplasmic MurNAc-6-P. Is also able to take up anhydro-N-acetylmuramic acid (anhMurNAc), but cannot phosphorylate the carbon 6, probably because of the 1,6-anhydro ring. The protein is PTS system N-acetylmuramic acid-specific EIIBC component (murP) of Shigella flexneri.